Here is a 221-residue protein sequence, read N- to C-terminus: Cysteine protease inhibitor 8 (221 aa).

Residues 1–26 form the signal peptide; sequence IPSINILSFLLLSSTLSLVAFARSFT. A propeptide spanning residues 27 to 42 is cleaved from the precursor; the sequence is SENPIVLPTTCHDDDN. The Vacuolar targeting signal motif lies at 29-34; the sequence is NPIVLP. Disulfide bonds link C84–C136 and C184–C190.

The protein belongs to the protease inhibitor I3 (leguminous Kunitz-type inhibitor) family.

The protein resides in the vacuole. Functionally, inhibitor of cysteine proteases. May protect the plant by inhibiting proteases of invading organisms. The chain is Cysteine protease inhibitor 8 from Solanum tuberosum (Potato).